We begin with the raw amino-acid sequence, 316 residues long: Phospholipase A1 4 (316 aa).

Residues 1 to 4 (ADDL) form the signal peptide. The propeptide occupies 5-14 (TTLRNGTLDR). A disulfide bridge connects residues C20 and C103. S153 acts as the Nucleophile in catalysis. D181 serves as the catalytic Charge relay system. 2 disulfide bridges follow: C192–C197 and C235–C240. The active-site Charge relay system is H242. Cystine bridges form between C257/C284, C258/C309, and C277/C282.

It belongs to the AB hydrolase superfamily. Lipase family. In terms of tissue distribution, expressed by the venom gland.

Its subcellular location is the secreted. It carries out the reaction a 1,2-diacyl-sn-glycero-3-phosphocholine + H2O = a 2-acyl-sn-glycero-3-phosphocholine + a fatty acid + H(+). Catalyzes the hydrolysis of phosphatidylcholine with phospholipase A1 activity. May act as an allergen and induce hemolytic activity. This is Phospholipase A1 4 from Polistes dominula (European paper wasp).